The following is a 198-amino-acid chain: Acireductone dioxygenase 2 (198 aa).

Residues His-99, His-101, Glu-105, and His-144 each contribute to the Fe(2+) site. Residues His-99, His-101, Glu-105, and His-144 each contribute to the Ni(2+) site.

The protein belongs to the acireductone dioxygenase (ARD) family. Fe(2+) is required as a cofactor. Requires Ni(2+) as cofactor. As to expression, ubiquitous.

It is found in the cytoplasm. The protein resides in the nucleus. It catalyses the reaction 1,2-dihydroxy-5-(methylsulfanyl)pent-1-en-3-one + O2 = 4-methylsulfanyl-2-oxobutanoate + formate + 2 H(+). The catalysed reaction is 1,2-dihydroxy-5-(methylsulfanyl)pent-1-en-3-one + O2 = 3-(methylsulfanyl)propanoate + CO + formate + 2 H(+). It functions in the pathway amino-acid biosynthesis; L-methionine biosynthesis via salvage pathway; L-methionine from S-methyl-5-thio-alpha-D-ribose 1-phosphate: step 5/6. In terms of biological role, catalyzes 2 different reactions between oxygen and the acireductone 1,2-dihydroxy-3-keto-5-methylthiopentene (DHK-MTPene) depending upon the metal bound in the active site. Fe-containing acireductone dioxygenase (Fe-ARD) produces formate and 2-keto-4-methylthiobutyrate (KMTB), the alpha-ketoacid precursor of methionine in the methionine recycle pathway. Ni-containing acireductone dioxygenase (Ni-ARD) produces methylthiopropionate, carbon monoxide and formate, and does not lie on the methionine recycle pathway. The sequence is that of Acireductone dioxygenase 2 (ARD2) from Oryza sativa subsp. indica (Rice).